The sequence spans 190 residues: dCTP deaminase, dUMP-forming (190 aa).

Residues 101-106 (KSSLGR), aspartate 119, 127-129 (TLE), glutamine 148, tyrosine 162, and glutamine 174 contribute to the dCTP site. Glutamate 129 acts as the Proton donor/acceptor in catalysis. The interval 162-184 (YGSAKVGSKYQGQRGPTPSRSYQ) is disordered. Over residues 171–184 (YQGQRGPTPSRSYQ) the composition is skewed to polar residues.

Belongs to the dCTP deaminase family. Homotrimer.

The catalysed reaction is dCTP + 2 H2O = dUMP + NH4(+) + diphosphate. It functions in the pathway pyrimidine metabolism; dUMP biosynthesis; dUMP from dCTP: step 1/1. Functionally, bifunctional enzyme that catalyzes both the deamination of dCTP to dUTP and the hydrolysis of dUTP to dUMP without releasing the toxic dUTP intermediate. The protein is dCTP deaminase, dUMP-forming of Mycobacterium sp. (strain JLS).